Here is a 628-residue protein sequence, read N- to C-terminus: MGSCARLLLLWGCSAVAAGLNGVAGANSRCEKACNPRMGNLALGRKLRADTMCGQNATELFCFYSENADLTCRQPKCDKCNAAHSHLAHPPSAMADSSFRFPRTWWQSAEDVHREKIQLDLEAEFYFTHLIMVFKSPRPAAMVLDRSQDFGKTWKPYKYFATNCSATFGLEDDVVKKGAICTSRYSNPFPCTGGEVIFRALSPPYDIENPYSAKVQEQLKITNLRVRLLKRQSCPCQINDLNAKPHHFMHYAVYDFIVKGSCFCNGHADQCLPVEGFRPIKAPGAFHVVHGRCMCKHNTAGSHCQHCAPLYNDRPWEAADGRTGAPNECRTCKCNGHADTCHFDVNVWEASGNRSGGVCNNCQHNTEGQHCQRCKPGFYRDLRRPFSAPDACKACSCHPVGSAILPFSSVTFCDPSNGDCPCKPGVAGPHCDRCMVGYWGFGDYGCRPCDCAGSCDPLTGDCISSNADVDWYHEVPAFHSMHNKSEPSWEWEDEQGFSALRHSGKCECKEQVLGNPKAFCGMKYSYVLKIKILSAHDKGSHAEVNVKIKKVLKSTKLKILRGKRTLYPESWTNRGCTCPILNPGLEYLVAGHEDVRTGKLIVNMKSFVQHWKPALGRRVMHILKRDCV.

The N-terminal stretch at 1-19 (MGSCARLLLLWGCSAVAAG) is a signal peptide. One can recognise a Laminin N-terminal domain in the interval 30 to 261 (CEKACNPRMG…AVYDFIVKGS (232 aa)). Residues asparagine 56 and asparagine 163 are each glycosylated (N-linked (GlcNAc...) asparagine). Intrachain disulfides connect cysteine 262-cysteine 271, cysteine 264-cysteine 293, cysteine 295-cysteine 304, cysteine 307-cysteine 329, cysteine 332-cysteine 341, cysteine 334-cysteine 359, cysteine 362-cysteine 371, cysteine 374-cysteine 392, cysteine 395-cysteine 413, cysteine 397-cysteine 420, cysteine 422-cysteine 431, and cysteine 434-cysteine 446. 3 consecutive Laminin EGF-like domains span residues 262-331 (CFCN…ECRT), 332-394 (CKCN…ACKA), and 395-448 (CSCH…GCRP). A glycan (N-linked (GlcNAc...) asparagine) is linked at asparagine 353. Asparagine 483 carries an N-linked (GlcNAc...) asparagine glycan. 2 disulfide bridges follow: cysteine 506/cysteine 576 and cysteine 520/cysteine 627. The 122-residue stretch at 506–627 (CECKEQVLGN…RVMHILKRDC (122 aa)) folds into the NTR domain.

In terms of assembly, may form a homodimer. Expressed in kidney, liver, heart, ovary, testis, retina, brain, olfactory bulb, and widely expressed in embryo.

The protein resides in the secreted. Its subcellular location is the extracellular space. It localises to the extracellular matrix. It is found in the basement membrane. Functionally, may play an important role in neural, kidney and vascular development. Promotes neurite elongation from olfactory bulb explants. The chain is Netrin-4 (Ntn4) from Mus musculus (Mouse).